Consider the following 248-residue polypeptide: tRNA (guanine-N(1)-)-methyltransferase (248 aa).

S-adenosyl-L-methionine-binding positions include G113 and 133-138 (IGDYVL).

The protein belongs to the RNA methyltransferase TrmD family. As to quaternary structure, homodimer.

Its subcellular location is the cytoplasm. The enzyme catalyses guanosine(37) in tRNA + S-adenosyl-L-methionine = N(1)-methylguanosine(37) in tRNA + S-adenosyl-L-homocysteine + H(+). Functionally, specifically methylates guanosine-37 in various tRNAs. This is tRNA (guanine-N(1)-)-methyltransferase from Shewanella woodyi (strain ATCC 51908 / MS32).